We begin with the raw amino-acid sequence, 91 residues long: Small ribosomal subunit protein uS19 (91 aa).

It belongs to the universal ribosomal protein uS19 family.

Functionally, protein S19 forms a complex with S13 that binds strongly to the 16S ribosomal RNA. This is Small ribosomal subunit protein uS19 from Neorickettsia sennetsu (strain ATCC VR-367 / Miyayama) (Ehrlichia sennetsu).